Here is a 230-residue protein sequence, read N- to C-terminus: Eukaryotic translation initiation factor 4E-1 (230 aa).

Residues 1–53 (MVVEDSQKSTITDEQNPSRVDNDDDDLEDGEILEDADDAASAASKPPSAFLRN) are disordered. Residues 8 to 19 (KSTITDEQNPSR) show a composition bias toward polar residues. Acidic residues predominate over residues 22 to 38 (NDDDDLEDGEILEDADD). Over residues 39–49 (AASAASKPPSA) the composition is skewed to low complexity. EIF4G-binding regions lie at residues 55–58 (HPLE) and 65–101 (FDNPSAKSKQAAWGSSIRPIYTFSTVEEFWSIYNNIH). Residues 73-78 (KQAAWG), Lys105, and 123-124 (WE) contribute to the mRNA site. Cys128 and Cys166 are oxidised to a cystine. Positions 149 to 158 (YTLLAMIGEQ) are EIF4G-binding. Residues 173–178 (RNRQDK) and 218–222 (KKHER) each bind mRNA.

Belongs to the eukaryotic initiation factor 4E family. As to quaternary structure, EIF4F is a multi-subunit complex, the composition of which varies with external and internal environmental conditions. It is composed of at least EIF4A, EIF4E and EIF4G. EIF4E is also known to interact with other partners. In higher plants two isoforms of EIF4F have been identified, named isoform EIF4F and isoform EIF(iso)4F. Isoform EIF4F has subunits p220 and p26, whereas isoform EIF(iso)4F has subunits p82 and p28. In terms of assembly, (Microbial infection) Interacts with potyvirus viral genome-linked protein (VPg); this interaction is possible in susceptible hosts but impaired in resistant plants. According to the redox status, the Cys-128-Cys-166 disulfide bridge may have a role in regulating protein function by affecting its ability to bind capped mRNA.

The protein localises to the nucleus. Its subcellular location is the cytoplasm. Functionally, component of the protein complex eIF4F, which is involved in the recognition of the mRNA cap, ATP-dependent unwinding of 5'-terminal secondary structure and recruitment of mRNA to the ribosome. Recognizes and binds the 7-methylguanosine-containing mRNA cap during an early step in the initiation of protein synthesis and facilitates ribosome binding by inducing the unwinding of the mRNAs secondary structures. Key component of recessive resistance to potyviruses. In terms of biological role, (Microbial infection) Susceptibility host factor required for viral infection by recruiting viral RNAs to the host ribosomal complex via an interaction with viral genome-linked protein (VPg). This is Eukaryotic translation initiation factor 4E-1 from Phaseolus vulgaris (Kidney bean).